The sequence spans 427 residues: 3-phosphoshikimate 1-carboxyvinyltransferase (427 aa).

3-phosphoshikimate is bound by residues Lys-20, Ser-21, and Arg-25. Position 20 (Lys-20) interacts with phosphoenolpyruvate. Residues Gly-92 and Arg-120 each coordinate phosphoenolpyruvate. Positions 166, 168, 312, and 339 each coordinate 3-phosphoshikimate. Gln-168 contributes to the phosphoenolpyruvate binding site. The active-site Proton acceptor is Asp-312. Positions 343 and 385 each coordinate phosphoenolpyruvate.

The protein belongs to the EPSP synthase family. As to quaternary structure, monomer.

It localises to the cytoplasm. The catalysed reaction is 3-phosphoshikimate + phosphoenolpyruvate = 5-O-(1-carboxyvinyl)-3-phosphoshikimate + phosphate. It participates in metabolic intermediate biosynthesis; chorismate biosynthesis; chorismate from D-erythrose 4-phosphate and phosphoenolpyruvate: step 6/7. Catalyzes the transfer of the enolpyruvyl moiety of phosphoenolpyruvate (PEP) to the 5-hydroxyl of shikimate-3-phosphate (S3P) to produce enolpyruvyl shikimate-3-phosphate and inorganic phosphate. This is 3-phosphoshikimate 1-carboxyvinyltransferase from Streptococcus agalactiae serotype Ia (strain ATCC 27591 / A909 / CDC SS700).